The sequence spans 293 residues: 3-hydroxybutyrate-oligomer hydrolase (293 aa).

The protein belongs to the AB hydrolase superfamily.

The protein resides in the cytoplasm. It catalyses the reaction (3R)-hydroxybutanoate pentamer + H2O = (3R)-hydroxybutanoate tetramer + (R)-3-hydroxybutanoate + H(+). It carries out the reaction (3R)-hydroxybutanoate tetramer + H2O = (3R)-hydroxybutanoate trimer + (R)-3-hydroxybutanoate + H(+). The enzyme catalyses (3R)-hydroxybutanoate trimer + H2O = (3R)-hydroxybutanoate dimer + (R)-3-hydroxybutanoate + H(+). The catalysed reaction is (3R)-hydroxybutanoate dimer + H2O = 2 (R)-3-hydroxybutanoate + H(+). It catalyses the reaction [(3R)-hydroxybutanoate](n) + H2O = [(3R)-hydroxybutanoate](n-1) + (R)-3-hydroxybutanoate + H(+). In terms of biological role, catalyzes the degradation of various 3-hydroxybutyrate (3HB) oligomers at a high specific activity and artificial amorphous poly(3-hydroxybutyrate) (PHB) at a lower specific activity. Hydrolyzes the 3HB pentamer most efficiently than the tetramer, trimer and dimer. Does not hydrolyze native PHB granules and semicrystalline PHB. Participates in the mobilization of PHB along with other hydrolases. The polypeptide is 3-hydroxybutyrate-oligomer hydrolase (Cupriavidus necator (strain ATCC 17699 / DSM 428 / KCTC 22496 / NCIMB 10442 / H16 / Stanier 337) (Ralstonia eutropha)).